Reading from the N-terminus, the 188-residue chain is dCTP deaminase (188 aa).

DCTP-binding positions include 111 to 116 (KSTYAR), 135 to 137 (TLE), Q156, Y170, K179, and Q180. The active-site Proton donor/acceptor is the E137.

This sequence belongs to the dCTP deaminase family. Homotrimer.

The catalysed reaction is dCTP + H2O + H(+) = dUTP + NH4(+). Its pathway is pyrimidine metabolism; dUMP biosynthesis; dUMP from dCTP (dUTP route): step 1/2. Its function is as follows. Catalyzes the deamination of dCTP to dUTP. The sequence is that of dCTP deaminase from Rickettsia canadensis (strain McKiel).